Here is a 65-residue protein sequence, read N- to C-terminus: Potassium channel toxin kappa-KTx 2.7 (65 aa).

A signal peptide spans 1-26 (MKTSGTVYVFLLLLAFGIFTDISSAC). Positions 27–39 (SEQMDDEDSYEVE) are excised as a propeptide. 2 cysteine pairs are disulfide-bonded: C45–C63 and C49–C59.

Belongs to the short scorpion toxin superfamily. Potassium channel inhibitor kappa-KTx family. Kappa-KTx 2 subfamily. Expressed by the venom gland.

It is found in the secreted. In terms of biological role, weakly inhibits the Kv7.1/KCNQ1 channel (10 uM of the toxin inhibits currents by 17.8%). The sequence is that of Potassium channel toxin kappa-KTx 2.7 from Heterometrus petersii (Asian forest scorpion).